We begin with the raw amino-acid sequence, 615 residues long: 1-deoxy-D-xylulose-5-phosphate synthase (615 aa).

Thiamine diphosphate-binding positions include H77 and 118-120 (GHS). D149 serves as a coordination point for Mg(2+). Residues 150–151 (GA), N178, Y286, and E367 contribute to the thiamine diphosphate site. N178 contributes to the Mg(2+) binding site.

Belongs to the transketolase family. DXPS subfamily. Homodimer. The cofactor is Mg(2+). Requires thiamine diphosphate as cofactor.

The enzyme catalyses D-glyceraldehyde 3-phosphate + pyruvate + H(+) = 1-deoxy-D-xylulose 5-phosphate + CO2. Its pathway is metabolic intermediate biosynthesis; 1-deoxy-D-xylulose 5-phosphate biosynthesis; 1-deoxy-D-xylulose 5-phosphate from D-glyceraldehyde 3-phosphate and pyruvate: step 1/1. Catalyzes the acyloin condensation reaction between C atoms 2 and 3 of pyruvate and glyceraldehyde 3-phosphate to yield 1-deoxy-D-xylulose-5-phosphate (DXP). This chain is 1-deoxy-D-xylulose-5-phosphate synthase, found in Glaesserella parasuis serovar 5 (strain SH0165) (Haemophilus parasuis).